Consider the following 469-residue polypeptide: Ribonuclease Y (469 aa).

A helical transmembrane segment spans residues 6 to 26 (VTLILVGVIIFLFISLFFYVI). The 61-residue stretch at 149–209 (FSFTIKLENE…IRREKAKRTM (61 aa)) folds into the KH domain. Residues 276–369 (VLLHCVEAAV…VKVVDKLSAS (94 aa)) enclose the HD domain.

It belongs to the RNase Y family.

It localises to the cell membrane. Endoribonuclease that initiates mRNA decay. This is Ribonuclease Y from Malacoplasma penetrans (strain HF-2) (Mycoplasma penetrans).